We begin with the raw amino-acid sequence, 141 residues long: Nucleoside diphosphate kinase (141 aa).

Positions 11, 59, 87, 93, 104, and 114 each coordinate ATP. The active-site Pros-phosphohistidine intermediate is the H117.

It belongs to the NDK family. As to quaternary structure, homotetramer. Requires Mg(2+) as cofactor.

The protein localises to the cytoplasm. It carries out the reaction a 2'-deoxyribonucleoside 5'-diphosphate + ATP = a 2'-deoxyribonucleoside 5'-triphosphate + ADP. The enzyme catalyses a ribonucleoside 5'-diphosphate + ATP = a ribonucleoside 5'-triphosphate + ADP. Its function is as follows. Major role in the synthesis of nucleoside triphosphates other than ATP. The ATP gamma phosphate is transferred to the NDP beta phosphate via a ping-pong mechanism, using a phosphorylated active-site intermediate. In Janthinobacterium sp. (strain Marseille) (Minibacterium massiliensis), this protein is Nucleoside diphosphate kinase.